We begin with the raw amino-acid sequence, 151 residues long: Large ribosomal subunit protein uL22 (151 aa).

It belongs to the universal ribosomal protein uL22 family. Part of the 50S ribosomal subunit.

Functionally, this protein binds specifically to 23S rRNA. It makes multiple contacts with different domains of the 23S rRNA in the assembled 50S subunit and ribosome. Its function is as follows. The globular domain of the protein is located near the polypeptide exit tunnel on the outside of the subunit, while an extended beta-hairpin is found that lines the wall of the exit tunnel in the center of the 70S ribosome. The polypeptide is Large ribosomal subunit protein uL22 (Thermofilum pendens (strain DSM 2475 / Hrk 5)).